The chain runs to 618 residues: D-glucuronyl C5-epimerase (618 aa).

The Cytoplasmic segment spans residues 1 to 11; sequence MRCLAARVNYK. Residues 12 to 29 traverse the membrane as a helical; Signal-anchor for type II membrane protein segment; it reads TLIIICALFTLVTVLLWN. Over 30–618 the chain is Lumenal; the sequence is KCSSDKAIQF…YLKGSRAKHN (589 aa). Residues tyrosine 180, 185-187, glutamine 202, tyrosine 210, glutamine 213, and glutamine 216 contribute to the substrate site; that span reads RDR. Ca(2+)-binding residues include threonine 238, glutamate 240, threonine 269, asparagine 270, and aspartate 393. Residues 430–433, 500–501, asparagine 511, tyrosine 515, tyrosine 561, arginine 564, and 573–582 contribute to the substrate site; these read KLGE, EY, and NLARWDYHTT.

This sequence belongs to the D-glucuronyl C5-epimerase family. Homodimer. Interacts with HS2ST1. In terms of tissue distribution, widely expressed with highest levels in lung and lowest levels in spleen.

It localises to the golgi apparatus membrane. The catalysed reaction is [heparosan-N-sulfate](n) = [heparan-N-sulfate](n). Its pathway is glycan metabolism; heparan sulfate biosynthesis. It functions in the pathway glycan metabolism; heparin biosynthesis. Its function is as follows. Converts D-glucuronic acid residues adjacent to N-sulfate sugar residues to L-iduronic acid residues, both in maturing heparan sulfate (HS) and heparin chains. This is important for further modifications that determine the specificity of interactions between these glycosaminoglycans and proteins. The sequence is that of D-glucuronyl C5-epimerase (Glce) from Mus musculus (Mouse).